The following is a 151-amino-acid chain: uncharacterized protein (151 aa).

The tract at residues arginine 48–phenylalanine 151 is disordered. Polar residues predominate over residues proline 55–lysine 77. 2 stretches are compositionally biased toward low complexity: residues proline 85–serine 105 and lysine 123–arginine 141.

This is an uncharacterized protein from Schizosaccharomyces pombe (strain 972 / ATCC 24843) (Fission yeast).